The following is a 39-amino-acid chain: Cytochrome b559 subunit beta (39 aa).

The helical transmembrane segment at 14–30 threads the bilayer; that stretch reads WLAIHGLAVPTVFFLGS. Residue His-18 coordinates heme.

The protein belongs to the PsbE/PsbF family. In terms of assembly, heterodimer of an alpha subunit and a beta subunit. PSII is composed of 1 copy each of membrane proteins PsbA, PsbB, PsbC, PsbD, PsbE, PsbF, PsbH, PsbI, PsbJ, PsbK, PsbL, PsbM, PsbT, PsbX, PsbY, PsbZ, Psb30/Ycf12, at least 3 peripheral proteins of the oxygen-evolving complex and a large number of cofactors. It forms dimeric complexes. Requires heme b as cofactor.

The protein localises to the plastid. It localises to the chloroplast thylakoid membrane. In terms of biological role, this b-type cytochrome is tightly associated with the reaction center of photosystem II (PSII). PSII is a light-driven water:plastoquinone oxidoreductase that uses light energy to abstract electrons from H(2)O, generating O(2) and a proton gradient subsequently used for ATP formation. It consists of a core antenna complex that captures photons, and an electron transfer chain that converts photonic excitation into a charge separation. This Ephedra sinica (Chinese ephedra) protein is Cytochrome b559 subunit beta.